The primary structure comprises 176 residues: Mitochondrial inner membrane protein Mpv17 (176 aa).

Transmembrane regions (helical) follow at residues 18-38 (VQVLTAGSLMGLGDIISQQLV), 53-73 (TMVSLGCGFVGPVVGGWYKVL), 94-114 (GGFAPCFLGCFLPLVGALNGL), and 131-151 (LITNYYLWPAVQLANFYLVPL).

It belongs to the peroxisomal membrane protein PXMP2/4 family. In terms of tissue distribution, ubiquitous. Expressed in pancreas, kidney, muscle, liver, lung, placenta, brain and heart.

The protein resides in the mitochondrion inner membrane. Functionally, non-selective channel that modulates the membrane potential under normal conditions and oxidative stress, and is involved in mitochondrial homeostasis. Involved in mitochondrial deoxynucleoside triphosphates (dNTP) pool homeostasis and mitochondrial DNA (mtDNA) maintenance. May be involved in the regulation of reactive oxygen species metabolism and the control of oxidative phosphorylation. The protein is Mitochondrial inner membrane protein Mpv17 of Homo sapiens (Human).